The chain runs to 1172 residues: MKEIKRGKRTRYSFERVQTPIPVPNLVEIQTKSYQDFLENGILKVLKKFSPITSSKSDLRKEKGFSLEFVSVRIGEPQNTVQECKERLLTYTVPVYTTVRITDNSTNEMIEEEAFLGYIPYMTPRTTFIINGAERVVVNQLVRSPGIYFVEEAKKTSGTKPIYVAHFLPVRGAWLEILLNLNDEVFYARIDRKRRINLFLLLKALGYSEDLELLSLFPYWIDVEDEYTLQHSEGLIILEDVKTKNGGLIAKRGDVITQGLIEKLENSDIQKIKVAHRYAVNTLEKLNHVYGENIEENRAYIEIFRKLRPGELPRINAAKIFLRNLYFNEERFELSEVGRFKMNNRLEEAYRKYLIEVEGKDPQGVEEVKYDETSNVLTPMDIVLASRNLIEIDKHPGTMDTKDHLGNKRVRTVGELIRIEFERAFSKAVFMIQEKLATYTSLDKISVQSLINVKSIIATINSFFATNPLSQFMDQTNPLAELTHKRRLTAVGPGGLKRERARFEVRDVHHSHYGRMCPIETPEGANIGLITSLSVYSSIDKFGFLITPYVKVVKGKVTNEIVYLTADEEENYKIAPSTIPIDEKGNIIPENVTVRYEEKVLYVNKNNVQFIDVAPNQIVSVSTSLIPFLEHDDANRALMGSNMQRQGVPLIETEAPRVGTGMEWEAAKYSGTLILAKHDGIVKKVDAQKIVIHRIDENGKEMYDSMGNPMLDIYELLKFTRTNQDTCINQRPIVNVGEIVKKDEPIADGPATDMGELALGKNVLVAFVPWEGYNFEDAILISEELLEKETYTSIHIEVYETTARDTRLGPEEITPDIPNVSKEKLRNLDEDGIIRIGAYVQETDILVGKVTPKSESDTTPEEKIIRSVFGEKGKEVKDTSLRVPHGIEGRVIAVHVFDKEKDGDLGPGVNKLIRVYVAIRKPLEVGDKLAGRHGNKGVVSKILPKEDMPFLPDGTPIQVVLSPLGVPSRMNVGQILETSLGWLAMLTNRWFATPVFDGAKEGDILPELYKARKKFGLEMGDFEENPSGKVILRDGRTGKEFDHPILVGYMYVMKLIHIARDKIHARSTGPYSLIHQQPLGGKAQFGGQRFGEMEVWALEAYGAAHTLNEMLTVKSDDIRGRNEVYKAIMKGKNIPEPGLPESFKVLVRELRGIALDVRVYDDEGNEIDIEKL.

It belongs to the RNA polymerase beta chain family. As to quaternary structure, the RNAP catalytic core consists of 2 alpha, 1 beta, 1 beta' and 1 omega subunit. When a sigma factor is associated with the core the holoenzyme is formed, which can initiate transcription.

The enzyme catalyses RNA(n) + a ribonucleoside 5'-triphosphate = RNA(n+1) + diphosphate. Its function is as follows. DNA-dependent RNA polymerase catalyzes the transcription of DNA into RNA using the four ribonucleoside triphosphates as substrates. The protein is DNA-directed RNA polymerase subunit beta of Thermosipho melanesiensis (strain DSM 12029 / CIP 104789 / BI429).